The primary structure comprises 240 residues: Pyridoxine 5'-phosphate synthase (240 aa).

Asparagine 7 serves as a coordination point for 3-amino-2-oxopropyl phosphate. 9–10 (DH) contributes to the 1-deoxy-D-xylulose 5-phosphate binding site. Residue arginine 18 coordinates 3-amino-2-oxopropyl phosphate. The active-site Proton acceptor is histidine 43. Arginine 45 and histidine 50 together coordinate 1-deoxy-D-xylulose 5-phosphate. Glutamate 70 acts as the Proton acceptor in catalysis. Threonine 100 serves as a coordination point for 1-deoxy-D-xylulose 5-phosphate. Histidine 191 (proton donor) is an active-site residue. Residues glycine 192 and 213–214 (GH) contribute to the 3-amino-2-oxopropyl phosphate site.

This sequence belongs to the PNP synthase family. As to quaternary structure, homooctamer; tetramer of dimers.

The protein localises to the cytoplasm. It catalyses the reaction 3-amino-2-oxopropyl phosphate + 1-deoxy-D-xylulose 5-phosphate = pyridoxine 5'-phosphate + phosphate + 2 H2O + H(+). It functions in the pathway cofactor biosynthesis; pyridoxine 5'-phosphate biosynthesis; pyridoxine 5'-phosphate from D-erythrose 4-phosphate: step 5/5. In terms of biological role, catalyzes the complicated ring closure reaction between the two acyclic compounds 1-deoxy-D-xylulose-5-phosphate (DXP) and 3-amino-2-oxopropyl phosphate (1-amino-acetone-3-phosphate or AAP) to form pyridoxine 5'-phosphate (PNP) and inorganic phosphate. The chain is Pyridoxine 5'-phosphate synthase from Cyanothece sp. (strain PCC 7425 / ATCC 29141).